We begin with the raw amino-acid sequence, 371 residues long: MRRPMTLFKRISSPALLALALFGGAAHAALVPPQGYYQGIEKLKTGDGNFRCEAAPQPYTGPLQFRSKYEGSDKARATLNAASEKAFRKSTEDITTLEKGVSKMVGQYMRDGRPAQLDCTLTWLGTWARAGALLSTDYNHTGKSMRKWALGSMSGSWLRLKFSNSQPLAAHQAEADLIEKWLTRLAEQTVRDWSDLPLEKINNHSYWAAWSVMATAVATDRRDLFDWAVKEYKVGANQVDDQGFLPNEIKRQQRALAYHNYALPPLAMIASFAQANGVDLRAENNFALQRLGEGVLAGARDPSHFKARAGKKQDMTDLKVDSKYSWLEPWCALYHCVGDTLERKHDMQPFNSFRLGGDVTRVYDPSAESKK.

A signal peptide spans Met-1–Ala-28. Residues Ser-67–Lys-68, His-140–Thr-141, and Tyr-258 contribute to the substrate site.

Belongs to the polysaccharide lyase 5 family.

The protein resides in the periplasm. It catalyses the reaction Eliminative cleavage of alginate to give oligosaccharides with 4-deoxy-alpha-L-erythro-hex-4-enuronosyl groups at their non-reducing ends and beta-D-mannuronate at their reducing end.. Catalyzes the depolymerization of alginate by cleaving the beta-1,4 glycosidic bond between two adjacent sugar residues via a beta-elimination mechanism. May serve to degrade mislocalized alginate that is trapped in the periplasmic space. The sequence is that of Alginate lyase from Pseudomonas putida (strain ATCC 47054 / DSM 6125 / CFBP 8728 / NCIMB 11950 / KT2440).